The following is a 254-amino-acid chain: Thiazole synthase (254 aa).

Catalysis depends on lysine 95, which acts as the Schiff-base intermediate with DXP. Residues glycine 156, 182–183 (AG), and 204–205 (NT) each bind 1-deoxy-D-xylulose 5-phosphate.

This sequence belongs to the ThiG family. Homotetramer. Forms heterodimers with either ThiH or ThiS.

Its subcellular location is the cytoplasm. The enzyme catalyses [ThiS sulfur-carrier protein]-C-terminal-Gly-aminoethanethioate + 2-iminoacetate + 1-deoxy-D-xylulose 5-phosphate = [ThiS sulfur-carrier protein]-C-terminal Gly-Gly + 2-[(2R,5Z)-2-carboxy-4-methylthiazol-5(2H)-ylidene]ethyl phosphate + 2 H2O + H(+). Its pathway is cofactor biosynthesis; thiamine diphosphate biosynthesis. Catalyzes the rearrangement of 1-deoxy-D-xylulose 5-phosphate (DXP) to produce the thiazole phosphate moiety of thiamine. Sulfur is provided by the thiocarboxylate moiety of the carrier protein ThiS. In vitro, sulfur can be provided by H(2)S. This chain is Thiazole synthase, found in Shewanella baltica (strain OS195).